We begin with the raw amino-acid sequence, 483 residues long: Protein nucleotidyltransferase YdiU (483 aa).

ATP-binding residues include Gly-87, Gly-89, Arg-90, Lys-110, Asp-122, Gly-123, Arg-173, and Arg-180. The Proton acceptor role is filled by Asp-249. Residues Asn-250 and Asp-259 each coordinate Mg(2+). Asp-259 is an ATP binding site.

The protein belongs to the SELO family. Mg(2+) is required as a cofactor. The cofactor is Mn(2+).

The enzyme catalyses L-seryl-[protein] + ATP = 3-O-(5'-adenylyl)-L-seryl-[protein] + diphosphate. The catalysed reaction is L-threonyl-[protein] + ATP = 3-O-(5'-adenylyl)-L-threonyl-[protein] + diphosphate. It carries out the reaction L-tyrosyl-[protein] + ATP = O-(5'-adenylyl)-L-tyrosyl-[protein] + diphosphate. It catalyses the reaction L-histidyl-[protein] + UTP = N(tele)-(5'-uridylyl)-L-histidyl-[protein] + diphosphate. The enzyme catalyses L-seryl-[protein] + UTP = O-(5'-uridylyl)-L-seryl-[protein] + diphosphate. The catalysed reaction is L-tyrosyl-[protein] + UTP = O-(5'-uridylyl)-L-tyrosyl-[protein] + diphosphate. In terms of biological role, nucleotidyltransferase involved in the post-translational modification of proteins. It can catalyze the addition of adenosine monophosphate (AMP) or uridine monophosphate (UMP) to a protein, resulting in modifications known as AMPylation and UMPylation. This chain is Protein nucleotidyltransferase YdiU, found in Yersinia pseudotuberculosis serotype O:1b (strain IP 31758).